Reading from the N-terminus, the 756-residue chain is Neutral ceramidase (756 aa).

Residues M1 to A11 lie on the Cytoplasmic side of the membrane. The helical; Signal-anchor for type II membrane protein transmembrane segment at F12–F32 threads the bilayer. Over V33–T756 the chain is Lumenal. O-linked (GalNAc...) threonine glycosylation is found at T56, T57, T58, and T64. Ca(2+) is bound at residue L110. H170 provides a ligand contact to Zn(2+). A glycan (N-linked (GlcNAc...) asparagine) is linked at N193. Zn(2+) is bound at residue H279. S330 acts as the Nucleophile in catalysis. 2 disulfide bridges follow: C338-C352 and C345-C360. N-linked (GlcNAc...) asparagine glycosylation is found at N407 and N444. C424 and C474 are joined by a disulfide. Zn(2+) is bound by residues E516 and Y555. D688, S690, and T693 together coordinate Ca(2+). Residues G746–T756 are required for correct folding and localization.

It belongs to the neutral ceramidase family. In terms of assembly, may interact with CAV1. Requires Zn(2+) as cofactor. In terms of processing, proteolytic cleavage of the N-terminus removes the signal-anchor and produces a soluble form of the protein. Post-translationally, N-glycosylated. Required for enzyme activity. O-glycosylated. Required to retain it as a type II membrane protein at the cell surface. In terms of processing, phosphorylated. May prevent ubiquitination and subsequent degradation. Post-translationally, ubiquitinated, leading to its degradation by the proteasome. Ubiquitination is triggered by nitric oxide. As to expression, widely expressed. Strongly expressed in small intestine and to a lower extent in liver and kidney. Highly expressed in duodenum, jejunum and ileum along the brush border of the small intestine (at protein level).

Its subcellular location is the cell membrane. The protein resides in the membrane raft. It localises to the membrane. It is found in the caveola. The protein localises to the golgi apparatus membrane. Its subcellular location is the mitochondrion. The protein resides in the secreted. It localises to the extracellular exosome. It carries out the reaction an N-acylsphing-4-enine + H2O = sphing-4-enine + a fatty acid. The enzyme catalyses N-hexadecanoylsphing-4-enine + H2O = sphing-4-enine + hexadecanoate. The catalysed reaction is N-dodecanoylsphing-4-enine + H2O = dodecanoate + sphing-4-enine. It catalyses the reaction N-octadecanoylsphing-4-enine + H2O = sphing-4-enine + octadecanoate. It carries out the reaction N-octanoylsphing-4-enine + H2O = octanoate + sphing-4-enine. The enzyme catalyses N-(hexanoyl)sphing-4-enine + H2O = hexanoate + sphing-4-enine. The catalysed reaction is N-tetradecanoylsphing-4-enine + H2O = tetradecanoate + sphing-4-enine. It catalyses the reaction N-(9Z-octadecenoyl)-sphing-4-enine + H2O = sphing-4-enine + (9Z)-octadecenoate. It carries out the reaction N-(15Z-tetracosenoyl)-sphing-4-enine + H2O = (15Z)-tetracosenoate + sphing-4-enine. The enzyme catalyses sphinganine + hexadecanoate = N-hexadecanoylsphinganine + H2O. The catalysed reaction is N-(octadecanoyl)-sphinganine + H2O = sphinganine + octadecanoate. Its pathway is lipid metabolism; sphingolipid metabolism. Inhibited by D-erythro-MAPP. Functionally, plasma membrane ceramidase that hydrolyzes sphingolipid ceramides into sphingosine and free fatty acids at neutral pH. Ceramides, sphingosine, and its phosphorylated form sphingosine-1-phosphate are bioactive lipids that mediate cellular signaling pathways regulating several biological processes including cell proliferation, apoptosis and differentiation. Also catalyzes the reverse reaction allowing the synthesis of ceramides from fatty acids and sphingosine. Together with sphingomyelinase, participates in the production of sphingosine and sphingosine-1-phosphate from the degradation of sphingomyelin, a sphingolipid enriched in the plasma membrane of cells. Also participates in the hydrolysis of ceramides from the extracellular milieu allowing the production of sphingosine-1-phosphate inside and outside cells. This is the case for instance with the digestion of dietary sphingolipids in the intestinal tract. The sequence is that of Neutral ceramidase (Asah2) from Mus musculus (Mouse).